Here is a 233-residue protein sequence, read N- to C-terminus: Nickel import system ATP-binding protein NikE (233 aa).

The ABC transporter domain maps to isoleucine 2–valine 228. Glycine 35–serine 42 contributes to the ATP binding site.

It belongs to the ABC transporter superfamily. As to quaternary structure, the complex is composed of two ATP-binding proteins (NikD and NikE), two transmembrane proteins (NikB and NikC) and a solute-binding protein (NikA).

Its subcellular location is the cell membrane. The catalysed reaction is Ni(2+)(out) + ATP + H2O = Ni(2+)(in) + ADP + phosphate + H(+). Part of the ABC transporter complex NikABCDE (Opp2) involved in nickel import. Probably responsible for energy coupling to the transport system. The sequence is that of Nickel import system ATP-binding protein NikE from Staphylococcus aureus (strain MRSA252).